The primary structure comprises 61 residues: Protein SspF (61 aa).

The protein belongs to the alpha/beta-type SASP family.

In terms of biological role, may play some important role in either sporulation or the dormant spore. The sequence is that of Protein SspF (sspF) from Bacillus subtilis (strain 168).